Here is a 363-residue protein sequence, read N- to C-terminus: 3-dehydroquinate synthase (363 aa).

NAD(+) is bound by residues 74–79 (DGEQYK), 108–112 (GVIGD), 132–133 (TT), K145, K154, and 172–175 (CLKT). E187, H250, and H267 together coordinate Zn(2+).

Belongs to the sugar phosphate cyclases superfamily. Dehydroquinate synthase family. It depends on NAD(+) as a cofactor. The cofactor is Co(2+). Requires Zn(2+) as cofactor.

Its subcellular location is the cytoplasm. It carries out the reaction 7-phospho-2-dehydro-3-deoxy-D-arabino-heptonate = 3-dehydroquinate + phosphate. It functions in the pathway metabolic intermediate biosynthesis; chorismate biosynthesis; chorismate from D-erythrose 4-phosphate and phosphoenolpyruvate: step 2/7. Catalyzes the conversion of 3-deoxy-D-arabino-heptulosonate 7-phosphate (DAHP) to dehydroquinate (DHQ). This is 3-dehydroquinate synthase from Buchnera aphidicola subsp. Acyrthosiphon pisum (strain APS) (Acyrthosiphon pisum symbiotic bacterium).